Consider the following 403-residue polypeptide: Tyrosine--tRNA ligase (403 aa).

The 'HIGH' region motif lies at 45-54 (PTAPDLHLGH). Positions 229 to 233 (KMSKS) match the 'KMSKS' region motif. Position 232 (Lys232) interacts with ATP. Residues 341-402 (VALCRLLAEA…GKRRFARITF (62 aa)) form the S4 RNA-binding domain.

The protein belongs to the class-I aminoacyl-tRNA synthetase family. TyrS type 2 subfamily. Homodimer.

It localises to the cytoplasm. It catalyses the reaction tRNA(Tyr) + L-tyrosine + ATP = L-tyrosyl-tRNA(Tyr) + AMP + diphosphate + H(+). Its function is as follows. Catalyzes the attachment of tyrosine to tRNA(Tyr) in a two-step reaction: tyrosine is first activated by ATP to form Tyr-AMP and then transferred to the acceptor end of tRNA(Tyr). The chain is Tyrosine--tRNA ligase from Geobacter sulfurreducens (strain ATCC 51573 / DSM 12127 / PCA).